The sequence spans 342 residues: Cathepsin B-like cysteine proteinase (342 aa).

The first 17 residues, 1 to 17 (MLKIAVYIVSLFTFLEA), serve as a signal peptide directing secretion. Residues 18-89 (HVTTRNNQRI…TVDHHDLNVE (72 aa)) constitute a propeptide, activation peptide. Cystine bridges form between Cys103–Cys132, Cys115–Cys159, Cys151–Cys217, Cys152–Cys155, Cys188–Cys221, and Cys196–Cys207. Residue Cys118 is part of the active site. Catalysis depends on residues His288 and Asn308.

This sequence belongs to the peptidase C1 family. As to expression, intestine (gut).

Functionally, thiol protease. Has a role as a digestive enzyme. This chain is Cathepsin B-like cysteine proteinase (CATB), found in Schistosoma japonicum (Blood fluke).